A 918-amino-acid polypeptide reads, in one-letter code: Chitin synthase C (918 aa).

Residues 1-63 form a disordered region; sequence MSYNRLGDPY…EMPSSDRLAE (63 aa). A compositionally biased stretch (low complexity) spans 22-37; it reads NPSSLSNRSPSPGRPL. Helical transmembrane passes span 562–581, 605–625, 637–657, and 672–692; these read WLNGSFFAAVYAITHFYQLW, LFAWFGIGNFFLVFHILTTYL, VLGVVFEWLYLATLVTCFVLS, and MVYLWVFIMIYLAFAAVFVTV. A glycan (N-linked (GlcNAc...) asparagine) is linked at Asn712. Transmembrane regions (helical) follow at residues 715–735, 845–865, and 890–910; these read FFSIIVSLGSTYVMWFIASII, VVLVWVFCNFALGAVVLSSAG, and VVLWSVAGLSIFKFLGAMWFL.

The protein belongs to the chitin synthase family. Class I subfamily. As to expression, mainly expressed in hyphae and conidiphores. Relatively strongly expressed in young cleistothecia and in mature ascospores, but negligible in Huelle cells.

Its subcellular location is the cell membrane. It is found in the cell septum. It localises to the cell tip. The catalysed reaction is [(1-&gt;4)-N-acetyl-beta-D-glucosaminyl](n) + UDP-N-acetyl-alpha-D-glucosamine = [(1-&gt;4)-N-acetyl-beta-D-glucosaminyl](n+1) + UDP + H(+). Its function is as follows. Polymerizes chitin, a structural polymer of the cell wall and septum, by transferring the sugar moiety of UDP-GlcNAc to the non-reducing end of the growing chitin polymer. ChsC and chsA share critical functions in hyphal wall integrity and differentiation. ChsA and chsC share also overlapping roles in septum formation. In Emericella nidulans (strain FGSC A4 / ATCC 38163 / CBS 112.46 / NRRL 194 / M139) (Aspergillus nidulans), this protein is Chitin synthase C.